A 235-amino-acid chain; its full sequence is Large ribosomal subunit protein uL1 (235 aa).

This sequence belongs to the universal ribosomal protein uL1 family. In terms of assembly, part of the 50S ribosomal subunit.

Functionally, binds directly to 23S rRNA. The L1 stalk is quite mobile in the ribosome, and is involved in E site tRNA release. In terms of biological role, protein L1 is also a translational repressor protein, it controls the translation of the L11 operon by binding to its mRNA. This is Large ribosomal subunit protein uL1 from Parasynechococcus marenigrum (strain WH8102).